The sequence spans 454 residues: MEREEEKRVSTLQQSFHHSKEPTFLINQAVLFGESHSSFLPEIERDNRGEKIKTNPRKNRPGTVILSKQSSRRIMSGSQPRPPVIPSRRPGFRVCYICGREFGSQSLGIHEPQCLEKWRVENSKLPKHLRRPEPSKPPPFSGSGSYSLQAANEAAFQSSQAQLLPCETCGRTFLPDRLLVHQRSCKQKVEGPRAPSLDRSDDLAGLKKVSSGITTRPRTVICYICGREFGTLSLPIHEPKCLEKWKVENDRLPREFRQPLPQKPQPLLTGQPKHAGPRQGQLVSCPNCSQTFAPDRLPVHQRSCKAQPSGPKVQDLTLGSRGGLKESTNPKPQRNMAAPPVTDKPKMIRRPPTIVCYICGREYGTKSIAIHEPQCLKKWHNENNLLPKELRRPEPKKPEVRTITAKGFYDLDALNEAAWTSAQSQLVPCNICGRTFLPDRLIVHQRSCKPKVAK.

The tract at residues 48–85 (RGEKIKTNPRKNRPGTVILSKQSSRRIMSGSQPRPPVI) is disordered. Positions 66–79 (LSKQSSRRIMSGSQ) are enriched in polar residues. The segment at 91–120 (GFRVCYICGREFGSQSLGIHEPQCLEKWRV) adopts a C2HC/C3H-type 1 zinc-finger fold. Positions 95, 98, 110, and 114 each coordinate Zn(2+). The tract at residues 125 to 146 (LPKHLRRPEPSKPPPFSGSGSY) is disordered. C2HC/C3H-type zinc fingers lie at residues 162-191 (QLLP…KVEG), 218-247 (RTVI…KWKV), 281-310 (QLVS…QPSG), 352-381 (PTIV…KWHN), and 425-454 (QLVP…KVAK). Zn(2+) contacts are provided by cysteine 166, cysteine 169, histidine 181, cysteine 185, cysteine 222, cysteine 225, histidine 237, and cysteine 241. The tract at residues 256–282 (FRQPLPQKPQPLLTGQPKHAGPRQGQL) is disordered. 12 residues coordinate Zn(2+): cysteine 285, cysteine 288, histidine 300, cysteine 304, cysteine 356, cysteine 359, histidine 371, cysteine 375, cysteine 429, cysteine 432, histidine 444, and cysteine 448. Residues 299 to 345 (VHQRSCKAQPSGPKVQDLTLGSRGGLKESTNPKPQRNMAAPPVTDKP) form a disordered region.

Requires Zn(2+) as cofactor.

The polypeptide is Zinc finger protein 474 (ZNF474) (Bos taurus (Bovine)).